Here is a 215-residue protein sequence, read N- to C-terminus: MKTVLLTGFDPFGGESINPAWEVAKSLHEKTIGEYKIISKQVPTVFHKSISVLKEYIEELAPEFIICIGQAGGRTDITIERVAINIDDARIADNEGNQPVDVPVVEEGPAAYWSTLPMKAIVKKLQEEGIPASVSQTAGTFVCNHLFYGLMHELEKHDTKMKGGFIHIPFLPEQASNYPGQPSMSLSTIRKGIELAVEVTTTVEVDIVEIGGTTH.

Active-site residues include glutamate 80, cysteine 143, and histidine 167.

This sequence belongs to the peptidase C15 family. In terms of assembly, homotetramer.

Its subcellular location is the cytoplasm. The enzyme catalyses Release of an N-terminal pyroglutamyl group from a polypeptide, the second amino acid generally not being Pro.. In terms of biological role, removes 5-oxoproline from various penultimate amino acid residues except L-proline. The protein is Pyrrolidone-carboxylate peptidase of Bacillus thuringiensis (strain Al Hakam).